The sequence spans 120 residues: Large ribosomal subunit protein uL24 (120 aa).

The disordered stretch occupies residues 1–33 (MTRQPHKQRNRQERAALHEKQKQVRAPLSPELR). Over residues 10–22 (NRQERAALHEKQK) the composition is skewed to basic and acidic residues.

The protein belongs to the universal ribosomal protein uL24 family. Part of the 50S ribosomal subunit.

In terms of biological role, one of two assembly initiator proteins, it binds directly to the 5'-end of the 23S rRNA, where it nucleates assembly of the 50S subunit. Functionally, located at the polypeptide exit tunnel on the outside of the subunit. In Natronomonas pharaonis (strain ATCC 35678 / DSM 2160 / CIP 103997 / JCM 8858 / NBRC 14720 / NCIMB 2260 / Gabara) (Halobacterium pharaonis), this protein is Large ribosomal subunit protein uL24.